The primary structure comprises 607 residues: UvrABC system protein C (607 aa).

A GIY-YIG domain is found at 12–91 (DSPGVYLYKD…IKRYRPRYNI (80 aa)). In terms of domain architecture, UVR spans 200 to 235 (ENLIKKLKKEMAIASDNLEFERAAKLRDQILALEKI).

This sequence belongs to the UvrC family. Interacts with UvrB in an incision complex.

It localises to the cytoplasm. Its function is as follows. The UvrABC repair system catalyzes the recognition and processing of DNA lesions. UvrC both incises the 5' and 3' sides of the lesion. The N-terminal half is responsible for the 3' incision and the C-terminal half is responsible for the 5' incision. The protein is UvrABC system protein C of Carboxydothermus hydrogenoformans (strain ATCC BAA-161 / DSM 6008 / Z-2901).